The primary structure comprises 460 residues: Kynureninase (460 aa).

Pyridoxal 5'-phosphate is bound by residues Leu-116, Thr-117, 144-147 (FPSD), Ser-199, Asp-228, His-231, and Tyr-253. N6-(pyridoxal phosphate)lysine is present on Lys-254. Positions 288 and 316 each coordinate pyridoxal 5'-phosphate.

This sequence belongs to the kynureninase family. Homodimer. It depends on pyridoxal 5'-phosphate as a cofactor.

Its subcellular location is the cytoplasm. The enzyme catalyses L-kynurenine + H2O = anthranilate + L-alanine + H(+). It catalyses the reaction 3-hydroxy-L-kynurenine + H2O = 3-hydroxyanthranilate + L-alanine + H(+). It participates in amino-acid degradation; L-kynurenine degradation; L-alanine and anthranilate from L-kynurenine: step 1/1. The protein operates within cofactor biosynthesis; NAD(+) biosynthesis; quinolinate from L-kynurenine: step 2/3. Functionally, catalyzes the cleavage of L-kynurenine (L-Kyn) and L-3-hydroxykynurenine (L-3OHKyn) into anthranilic acid (AA) and 3-hydroxyanthranilic acid (3-OHAA), respectively. The protein is Kynureninase of Debaryomyces hansenii (strain ATCC 36239 / CBS 767 / BCRC 21394 / JCM 1990 / NBRC 0083 / IGC 2968) (Yeast).